The sequence spans 565 residues: NAD-dependent malic enzyme (565 aa).

Catalysis depends on Tyr104, which acts as the Proton donor. Residue Arg157 participates in NAD(+) binding. Lys175 (proton acceptor) is an active-site residue. Positions 246, 247, and 270 each coordinate a divalent metal cation. Residues Asp270 and Asn418 each contribute to the NAD(+) site.

Belongs to the malic enzymes family. In terms of assembly, homotetramer. Requires Mg(2+) as cofactor. The cofactor is Mn(2+).

The catalysed reaction is (S)-malate + NAD(+) = pyruvate + CO2 + NADH. It carries out the reaction oxaloacetate + H(+) = pyruvate + CO2. This is NAD-dependent malic enzyme from Photorhabdus laumondii subsp. laumondii (strain DSM 15139 / CIP 105565 / TT01) (Photorhabdus luminescens subsp. laumondii).